We begin with the raw amino-acid sequence, 243 residues long: NAD(P)H-quinone oxidoreductase subunit K, chloroplastic (243 aa).

[4Fe-4S] cluster is bound by residues Cys65, Cys66, Cys130, and Cys161.

Belongs to the complex I 20 kDa subunit family. NDH is composed of at least 16 different subunits, 5 of which are encoded in the nucleus. It depends on [4Fe-4S] cluster as a cofactor.

The protein localises to the plastid. It localises to the chloroplast thylakoid membrane. The catalysed reaction is a plastoquinone + NADH + (n+1) H(+)(in) = a plastoquinol + NAD(+) + n H(+)(out). The enzyme catalyses a plastoquinone + NADPH + (n+1) H(+)(in) = a plastoquinol + NADP(+) + n H(+)(out). NDH shuttles electrons from NAD(P)H:plastoquinone, via FMN and iron-sulfur (Fe-S) centers, to quinones in the photosynthetic chain and possibly in a chloroplast respiratory chain. The immediate electron acceptor for the enzyme in this species is believed to be plastoquinone. Couples the redox reaction to proton translocation, and thus conserves the redox energy in a proton gradient. The sequence is that of NAD(P)H-quinone oxidoreductase subunit K, chloroplastic from Marchantia polymorpha (Common liverwort).